A 354-amino-acid chain; its full sequence is Guanine nucleotide-binding protein alpha-3 subunit (354 aa).

A lipid anchor (N-myristoyl glycine) is attached at glycine 2. Residue cysteine 4 is the site of S-palmitoyl cysteine attachment. The G-alpha domain occupies 32-354 (KVVKLLLLGA…QANLQGCGLY (323 aa)). The interval 35–48 (KLLLLGAGECGKST) is G1 motif. Residues 40-47 (GAGECGKS), 176-182 (LLSRIKT), 201-205 (DVGGQ), 270-273 (NKKD), and alanine 326 each bind GTP. Serine 47 and threonine 182 together coordinate Mg(2+). The interval 174 to 182 (DILLSRIKT) is G2 motif. Residues 197 to 206 (FRVFDVGGQR) form a G3 motif region. The tract at residues 266 to 273 (ILFLNKKD) is G4 motif. Residues 324–329 (TCATDT) form a G5 motif region.

Belongs to the G-alpha family. G(q) subfamily. In terms of assembly, g proteins are composed of 3 units; alpha, beta and gamma. The alpha chain contains the guanine nucleotide binding site.

Guanine nucleotide-binding proteins (G proteins) are involved as modulators or transducers in various transmembrane signaling systems. Promotes transcription of 3',5'-cyclic phosphodiesterases pde-1 and pde-5, leading to reduced cGMP levels in sensory neurons. This causes suppression of insulin production and signaling which leads to increased daf-16 activity and contributes to increased adult lifespan and resistance to oxidative stress. In addition, by reducing cGMP levels, inhibits TGF-beta signaling pathways. Involved in behavioral response to P.aeruginosa by controlling the expression of daf-7, a member of the TGF-beta family, in ASJ sensory neurons. The polypeptide is Guanine nucleotide-binding protein alpha-3 subunit (gpa-3) (Caenorhabditis briggsae).